Reading from the N-terminus, the 673-residue chain is Polygalacturonate 4-alpha-galacturonosyltransferase (673 aa).

At 1–22 (MALKRGLSGVNRIRGSGGGSRS) the chain is on the cytoplasmic side. Residues 23–43 (VLVLLIFFCVFAPLCFFVGRG) form a helical; Signal-anchor for type II membrane protein membrane-spanning segment. At 44-673 (VYIDSSNDYS…PYLRRCNLHE (630 aa)) the chain is on the lumenal side. A glycan (N-linked (GlcNAc...) asparagine) is linked at Asn103. The tract at residues 112 to 136 (GVDPSFRHSENPATPDVKSNNLNEK) is disordered. Residues Asn382, Asn434, Asn538, and Asn585 are each glycosylated (N-linked (GlcNAc...) asparagine).

The protein belongs to the glycosyltransferase 8 family. As to expression, expressed in seedlings, inflorescences, flowers, siliques, pollen, roots, stems and leaves.

It localises to the golgi apparatus membrane. The enzyme catalyses [(1-&gt;4)-alpha-D-galacturonosyl](n) + UDP-alpha-D-galacturonate = [(1-&gt;4)-alpha-D-galacturonosyl](n+1) + UDP + H(+). Its pathway is glycan metabolism; pectin biosynthesis. Its function is as follows. Involved in pectin biosynthesis. Catalyzes the transfer of galacturonic acid from uridine 5'-diphosphogalacturonic acid onto the pectic polysaccharide homogalacturonan. The polypeptide is Polygalacturonate 4-alpha-galacturonosyltransferase (GAUT1) (Arabidopsis thaliana (Mouse-ear cress)).